The sequence spans 238 residues: MKFTPSIVIDAPQYYVDHFNGKYNVDKCVILRDLQLETDSESMPSSLKHLTKPTHILDLTNNDLIMIPDLSRRDDIHTLLLGRNNIVEVDGRLLPMNVQNLTLSNNSIRRFEDLQRLRRAPRTLKNLTLIGNQVCHLANYREHVLRLVPHLETLDFQNVTAEERKSAMSFPRQADGDTLGPVNTAIRDNGSRDKTMEIMNLVVSKMTVERRNELKKQLAEATSLEEIARLEKLLSGGV.

3 LRR repeats span residues 53–74, 75–95, and 97–118; these read PTHI…SRRD, DIHT…RLLP, and NVQN…QRLR. Residues 132–170 enclose the LRRCT domain; it reads NQVCHLANYREHVLRLVPHLETLDFQNVTAEERKSAMSF. A disordered region spans residues 167–189; sequence AMSFPRQADGDTLGPVNTAIRDN.

This sequence belongs to the U2 small nuclear ribonucleoprotein A family. As to quaternary structure, belongs to the CWC complex (or CEF1-associated complex), a spliceosome sub-complex reminiscent of a late-stage spliceosome composed of the U2, U5 and U6 snRNAs and at least BUD13, BUD31, BRR2, CDC40, CEF1, CLF1, CUS1, CWC2, CWC15, CWC21, CWC22, CWC23, CWC24, CWC25, CWC27, ECM2, HSH155, IST3, ISY1, LEA1, MSL1, NTC20, PRP8, PRP9, PRP11, PRP19, PRP21, PRP22, PRP45, PRP46, SLU7, SMB1, SMD1, SMD2, SMD3, SMX2, SMX3, SNT309, SNU114, SPP2, SYF1, SYF2, RSE1 and YJU2. Interacts with MSL1.

It is found in the nucleus. In terms of biological role, involved in pre-mRNA splicing. Associates to U2 snRNA in a MSL1 dependent manner and is required for normal accumulation of U2 snRNA. Required for the spliceosome assembly and the efficient addition of U2 snRNP onto the pre-mRNA. This Saccharomyces cerevisiae (strain ATCC 204508 / S288c) (Baker's yeast) protein is U2 small nuclear ribonucleoprotein A' (LEA1).